The chain runs to 86 residues: Small ribosomal subunit protein bS20 (86 aa).

It belongs to the bacterial ribosomal protein bS20 family.

Its function is as follows. Binds directly to 16S ribosomal RNA. In Sulfurimonas denitrificans (strain ATCC 33889 / DSM 1251) (Thiomicrospira denitrificans (strain ATCC 33889 / DSM 1251)), this protein is Small ribosomal subunit protein bS20.